A 225-amino-acid polypeptide reads, in one-letter code: Protein-L-isoaspartate O-methyltransferase (225 aa).

Ser75 is an active-site residue.

Belongs to the methyltransferase superfamily. L-isoaspartyl/D-aspartyl protein methyltransferase family.

It localises to the cytoplasm. The catalysed reaction is [protein]-L-isoaspartate + S-adenosyl-L-methionine = [protein]-L-isoaspartate alpha-methyl ester + S-adenosyl-L-homocysteine. Functionally, catalyzes the methyl esterification of L-isoaspartyl residues in peptides and proteins that result from spontaneous decomposition of normal L-aspartyl and L-asparaginyl residues. It plays a role in the repair and/or degradation of damaged proteins. In Stenotrophomonas maltophilia (strain R551-3), this protein is Protein-L-isoaspartate O-methyltransferase.